We begin with the raw amino-acid sequence, 523 residues long: Sensory neuron membrane protein 1 (523 aa).

Residues 1–11 (MQLPKELKYAA) lie on the Cytoplasmic side of the membrane. Residues 12-32 (IAGGVALFGLIFGWVLFPTIL) traverse the membrane as a helical segment. The Extracellular portion of the chain corresponds to 33–458 (KSQLKKEMAL…HQLFIPKRVV (426 aa)). N-linked (GlcNAc...) asparagine glycosylation is found at Asn67 and Asn229. Cystine bridges form between Cys268-Cys333, Cys297-Cys352, and Cys335-Cys341. Asn440 is a glycosylation site (N-linked (GlcNAc...) asparagine). The helical transmembrane segment at 459 to 479 (GVLRWWVVSFGSLGAVIGIVF) threads the bilayer. Residues 480-523 (HFRDHIMRLAVSGDTKVSKVTPEEPEQKDISVIGQAQEPAKVNI) are Cytoplasmic-facing.

Belongs to the CD36 family. In terms of tissue distribution, detected in sensory neurons in the antenna.

The protein localises to the cell membrane. In terms of biological role, plays an olfactory role that is not restricted to pheromone sensitivity. The sequence is that of Sensory neuron membrane protein 1 from Heliothis virescens (Tobacco budworm moth).